A 272-amino-acid chain; its full sequence is Rhamnulose-1-phosphate aldolase (272 aa).

Glu117 is an active-site residue. The Zn(2+) site is built by His141, His143, and His212.

The protein belongs to the aldolase class II family. RhaD subfamily. Zn(2+) serves as cofactor.

Its subcellular location is the cytoplasm. The catalysed reaction is L-rhamnulose 1-phosphate = (S)-lactaldehyde + dihydroxyacetone phosphate. Its pathway is carbohydrate degradation; L-rhamnose degradation; glycerone phosphate from L-rhamnose: step 3/3. Functionally, catalyzes the reversible cleavage of L-rhamnulose-1-phosphate to dihydroxyacetone phosphate (DHAP) and L-lactaldehyde. This chain is Rhamnulose-1-phosphate aldolase, found in Mannheimia succiniciproducens (strain KCTC 0769BP / MBEL55E).